The chain runs to 210 residues: Troponin I, cardiac muscle (210 aa).

The disordered stretch occupies residues 1 to 43 (MADGSSDAAREPRPAPAPIRRRSSNYRAYATEPHAKKKSKISA). Residue A2 is modified to N-acetylalanine. Residues S5 and S6 each carry the phosphoserine modification. Phosphoserine; by PKA and PKD/PRKD1 is present on residues S23 and S24. At Y26 the chain carries Phosphotyrosine. T31 carries the phosphothreonine; by STK4/MST1 modification. Residues 32-79 (EPHAKKKSKISASRKLQLKTLLLQIAKQELEREAEERRGEKGRALSTR) are involved in binding TNC. Phosphoserine; by PKC/PRKCE is present on residues S42 and S44. T51 is subject to Phosphothreonine; by STK4/MST1. S77 bears the Phosphoserine mark. T78 is modified (phosphothreonine). T129 and T143 each carry phosphothreonine; by STK4/MST1. The segment at 129–149 (TQKIFDLRGKFKRPTLRRVRI) is involved in binding TNC and actin. At S150 the chain carries Phosphoserine; by PAK3. Phosphoserine is present on S166. T181 carries the post-translational modification Phosphothreonine. At S199 the chain carries Phosphoserine.

The protein belongs to the troponin I family. As to quaternary structure, binds to actin and tropomyosin. Interacts with TRIM63. Interacts with STK4/MST1. Post-translationally, phosphorylated at Ser-42 and Ser-44 by PRKCE; phosphorylation increases myocardium contractile dysfunction. Phosphorylated at Ser-23 and Ser-24 by PRKD1; phosphorylation reduces myofilament calcium sensitivity. Phosphorylated preferentially at Thr-31. Phosphorylation by STK4/MST1 alters its binding affinity to TNNC1 (cardiac Tn-C) and TNNT2 (cardiac Tn-T).

Functionally, troponin I is the inhibitory subunit of troponin, the thin filament regulatory complex which confers calcium-sensitivity to striated muscle actomyosin ATPase activity. This is Troponin I, cardiac muscle (TNNI3) from Homo sapiens (Human).